The following is a 570-amino-acid chain: Peptidyl-prolyl cis-trans isomerase-like 2 (570 aa).

In terms of domain architecture, U-box spans 37-110; the sequence is KRLPFNFCSL…GDYVDPVTYK (74 aa). Disordered regions lie at residues 215–253, 428–449, and 469–570; these read RSERAQRADSSAVTKKADGSTTTSTQSKTASFQSGKPTP, STTLNNLETHPVNSSTNRPTPD, and KKAE…SSWD. The span at 234 to 248 shows a compositional bias: low complexity; sequence STTTSTQSKTASFQS. A PPIase cyclophilin-type domain is found at 298–457; sequence QKGYARISTT…PDIRITDVTI (160 aa). Residues 428–446 show a composition bias toward polar residues; sequence STTLNNLETHPVNSSTNRP. The span at 469–483 shows a compositional bias: basic and acidic residues; the sequence is KKAEEASGKNKKVDP. Composition is skewed to acidic residues over residues 484-497 and 535-550; these read TEEDRETQQEDDDQ and QEEDEIVEFVDEEPEP.

The protein belongs to the cyclophilin-type PPIase family. PPIL2 subfamily.

It is found in the nucleus. The catalysed reaction is [protein]-peptidylproline (omega=180) = [protein]-peptidylproline (omega=0). The enzyme catalyses S-ubiquitinyl-[E2 ubiquitin-conjugating enzyme]-L-cysteine + [acceptor protein]-L-lysine = [E2 ubiquitin-conjugating enzyme]-L-cysteine + N(6)-ubiquitinyl-[acceptor protein]-L-lysine.. In terms of biological role, may catalyze the cis-trans isomerization of proline imidic peptide bonds in oligopeptides thereby assisting the folding of proteins. May also function as a chaperone, playing a role in intracellular transport of proteins. May also have a protein ubiquitin ligase activity acting as an E3 ubiquitin protein ligase or as a ubiquitin-ubiquitin ligase promoting elongation of ubiquitin chains on proteins. The sequence is that of Peptidyl-prolyl cis-trans isomerase-like 2 (cyp8) from Aspergillus oryzae (strain ATCC 42149 / RIB 40) (Yellow koji mold).